Reading from the N-terminus, the 1811-residue chain is ADP-ribosylation factor guanine nucleotide-exchange factor sec71 (1811 aa).

2 disordered regions span residues methionine 1–alanine 108 and isoleucine 316–serine 336. 3 stretches are compositionally biased toward basic and acidic residues: residues serine 33 to isoleucine 49, lysine 57 to glutamate 73, and proline 80 to glutamate 91. Serine 40 carries the phosphoserine modification. 2 stretches are compositionally biased toward polar residues: residues serine 92–alanine 108 and isoleucine 316–threonine 326. Threonine 326 carries the post-translational modification Phosphothreonine. Serine 332 and serine 353 each carry phosphoserine. Residues asparagine 533–isoleucine 537 carry the HUS box motif. Over residues threonine 643–serine 663 the composition is skewed to basic and acidic residues. The segment at threonine 643–aspartate 688 is disordered. The span at glycine 669–aspartate 688 shows a compositional bias: polar residues. The SEC7 domain occupies glutamine 692 to asparagine 880. The residue at position 741 (serine 741) is a Phosphoserine. Threonine 742 carries the post-translational modification Phosphothreonine. Residue aspartate 812 participates in Mg(2+) binding. An HDS1 domain region spans residues aspartate 889–aspartate 1103.

It localises to the cytoplasm. The protein resides in the golgi apparatus. Its subcellular location is the trans-Golgi network. The protein localises to the cytoplasmic vesicle. It is found in the COPI-coated vesicle membrane. It localises to the COPII-coated vesicle membrane. Its function is as follows. Guanine exchange factor that acts as an activator of arf1 at the trans-Golgi net-work and is thus involved in vesicular budding and traffic between compartments of the Golgi apparatus. Activation of Arf (ADP-ribosylation factor) GTPases is essential for vesicle formation via recruitment of cargo adapters and coat proteins necessary for Golgi trafficking. Involved in tunicamycin-induced ER stress response and subsequent apoptosis. The polypeptide is ADP-ribosylation factor guanine nucleotide-exchange factor sec71 (Schizosaccharomyces pombe (strain 972 / ATCC 24843) (Fission yeast)).